The chain runs to 600 residues: Molybdenum cofactor biosynthesis protein moc-5 (600 aa).

A molybdenum cofactor biosynthesis protein A region spans residues 4–371 (RAGKKLFQWS…AVNNKKARHA (368 aa)). The region spanning 68–284 (MFMREHTYLR…VDKYGDGVIR (217 aa)) is the Radical SAM core domain. Arg77 serves as a coordination point for GTP. [4Fe-4S] cluster contacts are provided by Cys84 and Cys88. Residue Tyr90 coordinates S-adenosyl-L-methionine. Residue Cys91 participates in [4Fe-4S] cluster binding. Arg127 serves as a coordination point for GTP. Gly131 lines the S-adenosyl-L-methionine pocket. Thr158 contributes to the GTP binding site. Ser182 provides a ligand contact to S-adenosyl-L-methionine. Lys218 is a GTP binding site. S-adenosyl-L-methionine is bound at residue Met252. Cys316 and Cys319 together coordinate [4Fe-4S] cluster. 321–323 (RLR) provides a ligand contact to GTP. Cys333 contacts [4Fe-4S] cluster. The interval 369–390 (RHAVFRNGRSEEPAKSSNDSYR) is disordered. Positions 396–595 (TSASSILVHL…SGGKTTYTID (200 aa)) are molybdenum cofactor biosynthesis protein C. Asp566 (for molybdenum cofactor biosynthesis protein C activity) is an active-site residue.

The protein in the C-terminal section; belongs to the MoaC family. This sequence in the N-terminal section; belongs to the radical SAM superfamily. MoaA family. Isoform a and isoform b probably form a heterooligomer. It depends on [4Fe-4S] cluster as a cofactor.

The catalysed reaction is GTP + AH2 + S-adenosyl-L-methionine = (8S)-3',8-cyclo-7,8-dihydroguanosine 5'-triphosphate + 5'-deoxyadenosine + L-methionine + A + H(+). It catalyses the reaction (8S)-3',8-cyclo-7,8-dihydroguanosine 5'-triphosphate = cyclic pyranopterin phosphate + diphosphate. Its pathway is cofactor biosynthesis; molybdopterin biosynthesis. In terms of biological role, probably forms a complex with isoform b that catalyzes the conversion of 5'-GTP to cyclic pyranopterin monophosphate (cPMP). Catalyzes the cyclization of GTP to (8S)-3',8-cyclo-7,8-dihydroguanosine 5'-triphosphate and mocs1b catalyzes the subsequent conversion of (8S)-3',8-cyclo-7,8-dihydroguanosine 5'-triphosphate to cPMP. Its function is as follows. Probably forms a complex with isoform a that catalyzes the conversion of 5'-GTP to cyclic pyranopterin monophosphate (cPMP). This Caenorhabditis elegans protein is Molybdenum cofactor biosynthesis protein moc-5.